A 629-amino-acid chain; its full sequence is EF-hand calcium-binding domain-containing protein 7 (629 aa).

The tract at residues Met-1–Lys-25 is disordered. The span at Ser-7–Ser-21 shows a compositional bias: polar residues. EF-hand domains follow at residues Thr-102–Lys-137 and Met-138–Gln-173. The disordered stretch occupies residues Asn-195–Asp-229. Phosphoserine is present on residues Ser-200 and Ser-212. Residues Glu-403–Glu-438 enclose the EF-hand 3 domain. Residues Asp-416, Asp-418, Asn-420, and Glu-427 each contribute to the Ca(2+) site.

As to quaternary structure, component of the EvC complex composed of EFCAB7, IQCE, EVC2 and EVC; built from two subcomplexes, EVC2:EVC and EFCAB7:IQCE. Interacts (via EF-hand 1 and 2) with IQCE (via N-terminus); this interaction anchors the EVC-EVC2 complex in a signaling microdomain at the base of cilia and stimulates the Hedgehog (Hh) pathway. Interacts with EVC2 (via N-terminal end). Interacts with EVC.

The protein localises to the cell projection. It is found in the cilium membrane. Its function is as follows. Component of the EvC complex that positively regulates ciliary Hedgehog (Hh) signaling. Required for the localization of the EVC2:EVC subcomplex at the base of primary cilia. The chain is EF-hand calcium-binding domain-containing protein 7 (EFCAB7) from Homo sapiens (Human).